The following is a 93-amino-acid chain: MKYITAISMLATAALTAATPLNGVEARWGSGGGGGGSTCDNNQQQVCCASVLSLICLVDVLGGNCNGGSYCCDNGASVGGLINLNLLNCVQIL.

The N-terminal stretch at 1 to 26 (MKYITAISMLATAALTAATPLNGVEA) is a signal peptide. 4 cysteine pairs are disulfide-bonded: Cys-39–Cys-71, Cys-47–Cys-65, Cys-48–Cys-56, and Cys-72–Cys-89.

This sequence belongs to the fungal hydrophobin family. As to quaternary structure, self-assembles to form functional amyloid fibrils called rodlets. Self-assembly into fibrillar rodlets occurs spontaneously at hydrophobic:hydrophilic interfaces and the rodlets further associate laterally to form amphipathic monolayers.

The protein resides in the secreted. It localises to the cell wall. Its function is as follows. Aerial growth, conidiation, and dispersal of filamentous fungi in the environment rely upon a capability of their secreting small amphipathic proteins called hydrophobins (HPBs) with low sequence identity. Class I can self-assemble into an outermost layer of rodlet bundles on aerial cell surfaces, conferring cellular hydrophobicity that supports fungal growth, development and dispersal; whereas Class II form highly ordered films at water-air interfaces through intermolecular interactions but contribute nothing to the rodlet structure. SSP1 is a class I hydrophobin that acts as an effector in the ericoid mycorrhizal interaction with Vaccinium myrtillus. May enhance attachment of the fungus to the root surface and protect the fungal hypha from plant defense compounds. The polypeptide is Class I hydrophobin SSP1 (Oidiodendron maius (strain Zn)).